The following is a 502-amino-acid chain: CBL-interacting serine/threonine-protein kinase 13 (502 aa).

The interval threonine 32–serine 51 is disordered. The span at glutamate 35–proline 48 shows a compositional bias: low complexity. The region spanning tyrosine 57–phenylalanine 311 is the Protein kinase domain. Residues leucine 63–valine 71 and lysine 86 each bind ATP. Aspartate 179 acts as the Proton acceptor in catalysis. Residues aspartate 197–glutamate 226 form an activation loop region. Serine 201 carries the phosphoserine modification. Threonine 215 bears the Phosphothreonine mark. The interval aspartate 331–isoleucine 359 is disordered. A compositionally biased stretch (low complexity) spans serine 340–glutamate 352. The NAF domain occupies proline 366–glutamate 387. The tract at residues glycine 390 to valine 419 is PPI.

It belongs to the protein kinase superfamily. CAMK Ser/Thr protein kinase family. SNF1 subfamily. As to quaternary structure, interacts with CBL2 and CBL3. The cofactor is Mn(2+).

The catalysed reaction is L-seryl-[protein] + ATP = O-phospho-L-seryl-[protein] + ADP + H(+). It catalyses the reaction L-threonyl-[protein] + ATP = O-phospho-L-threonyl-[protein] + ADP + H(+). Its function is as follows. CIPK serine-threonine protein kinases interact with CBL proteins. Binding of a CBL protein to the regulatory NAF domain of CIPK protein lead to the activation of the kinase in a calcium-dependent manner. The protein is CBL-interacting serine/threonine-protein kinase 13 (CIPK13) of Arabidopsis thaliana (Mouse-ear cress).